Here is a 134-residue protein sequence, read N- to C-terminus: Profilin-3 (134 aa).

A disulfide bond links Cys-13 and Cys-118. Positions 84–100 (AVIRGKKGSGGITIKKT) match the Involved in PIP2 interaction motif.

This sequence belongs to the profilin family. As to quaternary structure, occurs in many kinds of cells as a complex with monomeric actin in a 1:1 ratio. Post-translationally, phosphorylated by MAP kinases.

The protein localises to the cytoplasm. Its subcellular location is the cytoskeleton. Its function is as follows. Binds to actin and affects the structure of the cytoskeleton. At high concentrations, profilin prevents the polymerization of actin, whereas it enhances it at low concentrations. This is Profilin-3 from Olea europaea (Common olive).